The primary structure comprises 1373 residues: TAL effector protein PthXo1 (1373 aa).

Disordered stretches follow at residues 1-68 (MDPI…SAGS) and 127-152 (AARPPRAKPAPRRRAAQPSDASPAAQ). Residues 131 to 141 (PRAKPAPRRRA) show a composition bias toward basic residues. Low complexity predominate over residues 142 to 152 (AQPSDASPAAQ). One copy of the Cryptic repeat -1 repeat lies at 221–239 (THEDIVGVGKQWSGARALE). A Cryptic repeat 0 repeat occupies 256-273 (DTGQLVKIAKRGGVTAVE). Core repeat repeat units lie at residues 289–322 (LTPAQVVAIASNNGGKQALETVQRLLPVLCQAHG), 323–356 (LTPAQVVAIASHDGGKQALETMQRLLPVLCQAHG), 357–390 (LPPDQVVAIASNIGGKQALETVQRLLPVLCQAHG), 391–424 (LTPDQVVAIASHGGGKQALETVQRLLPVLCQAHG), 425–458 (LTPDQVVAIASHDGGKQALETVQRLLPVLCQAHG), 459–492 (LTPDQVVAIASNGGGKQALETVQRLLPVLCQAHG), 493–525 (LTPDQVVAIASNGGKQALETVQRLLPVLCQAHG), 526–559 (LTPDQVVAIASHDGGKQALETVQRLLPVLCQTHG), 560–593 (LTPAQVVAIASHDGGKQALETVQQLLPVLCQAHG), 594–627 (LTPDQVVAIASNIGGKQALATVQRLLPVLCQAHG), 628–661 (LTPDQVVAIASNGGGKQALETVQRLLPVLCQAHG), 662–695 (LTPDQVVAIASNGGGKQALETVQRLLPVLCQAHG), 696–729 (LTQVQVVAIASNIGGKQALETVQRLLPVLCQAHG), 730–763 (LTPAQVVAIASHDGGKQALETVQRLLPVLCQAHG), 764–797 (LTPDQVVAIASNGGGKQALETVQRLLPVLCQAHG), 798–831 (LTQEQVVAIASNNGGKQALETVQRLLPVLCQAHG), 832–865 (LTPDQVVAIASNGGGKQALETVQRLLPVLCQAHG), 866–899 (LTPAQVVAIASNIGGKQALETVQRLLPVLCQDHG), 900–933 (LTLAQVVAIASNIGGKQALETVQRLLPVLCQAHG), 934–967 (LTQDQVVAIASNIGGKQALETVQRLLPVLCQDHG), 968–1001 (LTPDQVVAIASNIGGKQALETVQRLLPVLCQDHG), 1002–1034 (LTLDQVVAIASNGGKQALETVQRLLPVLCQDHG), and 1035–1068 (LTPDQVVAIASNSGGKQALETVQRLLPVLCQDHG). 4 HEAT repeats span residues 714–760 (LETV…VLCQ), 782–828 (LETV…VLCQ), 850–893 (LETV…LLPV), and 918–961 (LETV…LLPV). The stretch at 1053–1091 (LETVQRLLPVLCQDHGLTPNQVVAIASNGGKQALESIVA) is one HEAT 5 repeat. One copy of the Core repeat 23.5 repeat lies at 1069 to 1087 (LTPNQVVAIASNGGKQALE). The segment at 1136–1364 (RVNRRIGERT…ELAWLMELLP (229 aa)) is acidic activation domain. Residues 1222–1225 (KRAK) carry the Nuclear localization signal NLS1 motif. The disordered stretch occupies residues 1250-1286 (LDAPSPMHEGDQTGASSRKRSRSDRAVTGPSAQHSFE). Residues 1268 to 1271 (KRSR) carry the Nuclear localization signal NLS2 motif. The Nuclear localization signal NLS3 signature appears at 1305 to 1308 (KRPR).

The protein belongs to the transcription activator-like effector (TALE) family.

The protein localises to the secreted. It localises to the host nucleus. Functionally, avirulence protein. Acts as a transcription factor in rice, inducing expression of a number of host genes including SWEET11 (Os8N3, XA13, AC Q6YZF3) in susceptible plants with the Xa13 allele. Plants with the xa13 allele, which has an altered promoter, are resistant to bacterial blight caused by this bacterial strain and do not induce SWEET11. The xa13 allele elicits an atypical hypersensitive response (HR). PthXo1 binds SWEET11 promoter DNA in a sequence-specific manner. This is TAL effector protein PthXo1 (pthXo1) from Xanthomonas oryzae pv. oryzae (strain PXO99A).